Reading from the N-terminus, the 2845-residue chain is Multiple epidermal growth factor-like domains protein 8 (2845 aa).

A signal peptide spans M1–A27. Residues G28 to D2647 are Extracellular-facing. Disulfide bonds link C30-C57, C142-C152, C146-C158, C174-C184, C178-C191, and C193-C202. A CUB 1 domain is found at C30 to S140. N-linked (GlcNAc...) asparagine glycosylation occurs at N50. EGF-like domains lie at R138–D168 and G170–D203. The N-linked (GlcNAc...) asparagine glycan is linked to N217. 6 Kelch repeats span residues L241 to W287, S290 to A338, W346 to P399, A402 to A453, Y459 to S511, and V525 to P575. PSI domains follow at residues Y561–Q613, S847–P899, and L900–P947. N1048 carries an N-linked (GlcNAc...) asparagine glycan. In terms of domain architecture, EGF-like 3; calcium-binding spans D1074–N1115. 16 disulfides stabilise this stretch: C1078/C1091, C1085/C1100, C1102/C1114, C1163/C1171, C1165/C1179, C1182/C1191, C1194/C1208, C1211/C1224, C1213/C1231, C1233/C1242, C1245/C1259, C1263/C1302, C1336/C1367, C1407/C1421, C1415/C1433, and C1435/C1444. Laminin EGF-like domains follow at residues C1163–P1210 and C1211–R1261. Residues C1263–A1405 form the CUB 2 domain. Residue N1271 is glycosylated (N-linked (GlcNAc...) asparagine). T1353 bears the Phosphothreonine mark. The 43-residue stretch at G1403–R1445 folds into the EGF-like 4 domain. 6 Kelch repeats span residues T1522–A1570, A1580–T1626, S1632–Y1679, S1685–S1735, T1796–A1843, and R1852–A1898. Residues R1726–E1745 form a disordered region. PSI domains are found at residues P1876–S1916, E1924–R1979, P2060–S2118, and G2120–P2177. The N-linked (GlcNAc...) asparagine glycan is linked to N2066. The region spanning P2178–T2216 is the EGF-like 5 domain. Intrachain disulfides connect C2182–C2195 and C2189–C2204. N-linked (GlcNAc...) asparagine glycosylation is present at N2229. 8 disulfides stabilise this stretch: C2253-C2261, C2255-C2270, C2273-C2282, C2285-C2299, C2380-C2389, C2382-C2397, C2399-C2424, and C2427-C2441. 2 Laminin EGF-like domains span residues C2253–P2301 and C2380–R2443. The tract at residues T2523–P2564 is disordered. Residues Q2527 to D2540 show a composition bias toward pro residues. Over residues G2542 to S2556 the composition is skewed to gly residues. The chain crosses the membrane as a helical span at residues L2648–L2668. Residues L2669–L2845 lie on the Cytoplasmic side of the membrane. The span at G2817 to R2831 shows a compositional bias: gly residues. The tract at residues G2817–L2845 is disordered. The span at S2836 to L2845 shows a compositional bias: polar residues.

It localises to the membrane. Its function is as follows. Acts as a negative regulator of hedgehog signaling. In Homo sapiens (Human), this protein is Multiple epidermal growth factor-like domains protein 8 (MEGF8).